Consider the following 274-residue polypeptide: ATP synthase subunit delta (274 aa).

Belongs to the ATPase delta chain family. F-type ATPases have 2 components, F(1) - the catalytic core - and F(0) - the membrane proton channel. F(1) has five subunits: alpha(3), beta(3), gamma(1), delta(1), epsilon(1). F(0) has three main subunits: a(1), b(2) and c(10-14). The alpha and beta chains form an alternating ring which encloses part of the gamma chain. F(1) is attached to F(0) by a central stalk formed by the gamma and epsilon chains, while a peripheral stalk is formed by the delta and b chains.

It is found in the cell membrane. Its function is as follows. F(1)F(0) ATP synthase produces ATP from ADP in the presence of a proton or sodium gradient. F-type ATPases consist of two structural domains, F(1) containing the extramembraneous catalytic core and F(0) containing the membrane proton channel, linked together by a central stalk and a peripheral stalk. During catalysis, ATP synthesis in the catalytic domain of F(1) is coupled via a rotary mechanism of the central stalk subunits to proton translocation. Functionally, this protein is part of the stalk that links CF(0) to CF(1). It either transmits conformational changes from CF(0) to CF(1) or is implicated in proton conduction. The sequence is that of ATP synthase subunit delta from Corynebacterium efficiens (strain DSM 44549 / YS-314 / AJ 12310 / JCM 11189 / NBRC 100395).